The chain runs to 295 residues: Putative F-box protein At5g44220 (295 aa).

One can recognise an F-box domain in the interval 56–102 (STNSDLLPMDLIKEILKRLPAKTLARFLCVSKLWSSIIRSRDLMKLF).

The chain is Putative F-box protein At5g44220 from Arabidopsis thaliana (Mouse-ear cress).